A 113-amino-acid chain; its full sequence is 2Fe-2S ferredoxin (113 aa).

The 2Fe-2S ferredoxin-type domain occupies 2 to 104; sequence PKVIFLPNED…DLVVEIPKYN (103 aa). Residues Cys42, Cys48, Cys51, and Cys87 each coordinate [2Fe-2S] cluster.

Belongs to the adrenodoxin/putidaredoxin family. The cofactor is [2Fe-2S] cluster.

Its function is as follows. Ferredoxin are iron-sulfur proteins that transfer electrons in a wide variety of metabolic reactions. This is 2Fe-2S ferredoxin (fdx) from Haemophilus influenzae (strain ATCC 51907 / DSM 11121 / KW20 / Rd).